Reading from the N-terminus, the 510-residue chain is NAD(P)H-quinone oxidoreductase subunit 2 A, chloroplastic (510 aa).

The next 12 membrane-spanning stretches (helical) occupy residues 31 to 51 (FIFPECILIFGLILLLMIDLT), 59 to 79 (WFYFISSTSLVISITALLFRW), 99 to 119 (IFQFLILLCSTLCIPLSVEYI), 124 to 144 (MAITEFLLFVLTATLGGMFLC), 149 to 169 (LITIFVAPECFSLCSYLLSGY), 183 to 203 (YLLMGGASSSILVHGFSWLYG), 229 to 249 (ISIALISITVGLGFKLSPAPF), 295 to 315 (WHLLLEILAILSMILGNLLAI), 323 to 343 (MLAYSSIGQIGYVIIGIIVGD), 354 to 374 (YMLFYISMNLGTFACIVLFGL), 395 to 415 (ALSLALCLLSLGGLPPLAGFF), and 418 to 438 (LYLFWCGWQAGLYFLVSIGLL).

Belongs to the complex I subunit 2 family. As to quaternary structure, NDH is composed of at least 16 different subunits, 5 of which are encoded in the nucleus.

It localises to the plastid. It is found in the chloroplast thylakoid membrane. The catalysed reaction is a plastoquinone + NADH + (n+1) H(+)(in) = a plastoquinol + NAD(+) + n H(+)(out). It carries out the reaction a plastoquinone + NADPH + (n+1) H(+)(in) = a plastoquinol + NADP(+) + n H(+)(out). NDH shuttles electrons from NAD(P)H:plastoquinone, via FMN and iron-sulfur (Fe-S) centers, to quinones in the photosynthetic chain and possibly in a chloroplast respiratory chain. The immediate electron acceptor for the enzyme in this species is believed to be plastoquinone. Couples the redox reaction to proton translocation, and thus conserves the redox energy in a proton gradient. This chain is NAD(P)H-quinone oxidoreductase subunit 2 A, chloroplastic, found in Oryza nivara (Indian wild rice).